The sequence spans 469 residues: 3-isopropylmalate dehydratase large subunit (469 aa).

[4Fe-4S] cluster contacts are provided by cysteine 347, cysteine 410, and cysteine 413.

This sequence belongs to the aconitase/IPM isomerase family. LeuC type 1 subfamily. As to quaternary structure, heterodimer of LeuC and LeuD. [4Fe-4S] cluster serves as cofactor.

The catalysed reaction is (2R,3S)-3-isopropylmalate = (2S)-2-isopropylmalate. The protein operates within amino-acid biosynthesis; L-leucine biosynthesis; L-leucine from 3-methyl-2-oxobutanoate: step 2/4. Catalyzes the isomerization between 2-isopropylmalate and 3-isopropylmalate, via the formation of 2-isopropylmaleate. The polypeptide is 3-isopropylmalate dehydratase large subunit (Cupriavidus pinatubonensis (strain JMP 134 / LMG 1197) (Cupriavidus necator (strain JMP 134))).